The chain runs to 584 residues: N(6)-adenosine-methyltransferase subunit METTL3 (584 aa).

Disordered stretches follow at residues 1–65 (MSDT…EHPP) and 162–221 (KADD…SNKV). Positions 187–204 (RKSSVSLATASISQLTAS) are enriched in polar residues. The Nuclear localization signal signature appears at 213–220 (DKKGRSNK). S-adenosyl-L-methionine is bound by residues 381–382 (DI) and aspartate 399. Residues 400–414 (PPWDIHMELPYGTLT) are gate loop 1. Interaction with METTL14 stretches follow at residues 454–458 (DRVDE) and 468–484 (QRII…NHGK). Positions 466–483 (QLQRIIRTGRTGHWLNHG) are interphase loop. Residues 469–482 (RIIRTGRTGHWLNH) form a positively charged region required for RNA-binding region. The segment at 511-519 (VRSTSHKPD) is gate loop 2. Residues lysine 517, 540 to 543 (RPHN), and 553 to 554 (NQ) each bind S-adenosyl-L-methionine.

The protein belongs to the MT-A70-like family. Heterodimer; heterodimerizes with mettl14 to form an antiparallel heterodimer that constitutes an active methyltransferase. Component of the WMM complex, a N6-methyltransferase complex composed of a catalytic subcomplex, named MAC, and of an associated subcomplex, named MACOM. The MAC subcomplex is composed of mettl3 and mettl14. In terms of tissue distribution, expressed in the hemato-vascular system: enriched in sorted endothelial cells and haemogenic endothelium.

The protein localises to the nucleus. Its subcellular location is the nucleus speckle. It localises to the cytoplasm. It catalyses the reaction an adenosine in mRNA + S-adenosyl-L-methionine = an N(6)-methyladenosine in mRNA + S-adenosyl-L-homocysteine + H(+). Functionally, the METTL3-METTL14 heterodimer forms a N6-methyltransferase complex that methylates adenosine residues at the N(6) position of some RNAs and regulates various processes such as the circadian clock, differentiation of embryonic and hematopoietic stem cells, cortical neurogenesis, response to DNA damage, differentiation of T-cells and primary miRNA processing. In the heterodimer formed with mettl14, mettl3 constitutes the catalytic core. N6-methyladenosine (m6A), which takes place at the 5'-[AG]GAC-3' consensus sites of some mRNAs, plays a role in mRNA stability, processing and translation efficiency. M6A is also involved in hematopoietic stem cells specification: m6A methylation and subsequent destabilization of mRNAs, such as notch1a, leads to decreased Notch signaling, promoting endothelial to hematopoietic transition. M6A also takes place in other RNA molecules, such as primary miRNA (pri-miRNAs). Mediates methylation of pri-miRNAs. The sequence is that of N(6)-adenosine-methyltransferase subunit METTL3 from Danio rerio (Zebrafish).